The primary structure comprises 349 residues: E3 ubiquitin-protein ligase SINA-like 10 (349 aa).

The interval 1-77 is disordered; the sequence is MARFSVCGGD…STSDDSDREV (77 aa). Residues 113 to 149 form an RING-type; degenerate zinc finger; it reads CPICCEPLKIPIFQCDNGHLACTLCCTKVRNRCPSCT. An SBD region spans residues 163 to 344; sequence VIEASRVSCL…NLQIWIGHGR (182 aa). The SIAH-type zinc finger occupies 166–224; the sequence is ASRVSCLNAKYGCKESTSYGNRFSHEQVCVFTPCSCPILDCHYTGYYKDLNNHVRAEHK. Zn(2+)-binding residues include Cys171, Cys178, His190, Cys194, Cys201, Cys206, His218, and His223.

This sequence belongs to the SINA (Seven in absentia) family.

The catalysed reaction is S-ubiquitinyl-[E2 ubiquitin-conjugating enzyme]-L-cysteine + [acceptor protein]-L-lysine = [E2 ubiquitin-conjugating enzyme]-L-cysteine + N(6)-ubiquitinyl-[acceptor protein]-L-lysine.. It functions in the pathway protein modification; protein ubiquitination. In terms of biological role, E3 ubiquitin-protein ligase that mediates ubiquitination and subsequent proteasomal degradation of target proteins. E3 ubiquitin ligases accept ubiquitin from an E2 ubiquitin-conjugating enzyme in the form of a thioester and then directly transfers the ubiquitin to targeted substrates. It probably triggers the ubiquitin-mediated degradation of different substrates. The sequence is that of E3 ubiquitin-protein ligase SINA-like 10 from Arabidopsis thaliana (Mouse-ear cress).